The chain runs to 316 residues: Protoheme IX farnesyltransferase (316 aa).

9 helical membrane passes run 29–49, 54–74, 102–122, 123–143, 151–171, 179–199, 224–241, 245–267, and 283–303; these read IIPL…EGRV, LLIT…LNCI, LIFA…FVNV, LSGC…THWL, IVIG…AVTG, VLFA…ALMI, IWYY…LVYP, LGIL…AWQL, and FSIF…LPVT.

Belongs to the UbiA prenyltransferase family. Protoheme IX farnesyltransferase subfamily.

The protein resides in the cell inner membrane. It carries out the reaction heme b + (2E,6E)-farnesyl diphosphate + H2O = Fe(II)-heme o + diphosphate. It participates in porphyrin-containing compound metabolism; heme O biosynthesis; heme O from protoheme: step 1/1. In terms of biological role, converts heme B (protoheme IX) to heme O by substitution of the vinyl group on carbon 2 of heme B porphyrin ring with a hydroxyethyl farnesyl side group. The sequence is that of Protoheme IX farnesyltransferase from Synechocystis sp. (strain ATCC 27184 / PCC 6803 / Kazusa).